The primary structure comprises 98 residues: MHYIYINIIIAFSMSLLGALLYRSHIMSSLLCLEGMMLALFVLSTLIALNMQFTLATMMPIILLVFAACEAAIGLSLLVMVSNTYGLDYVQNLNLLQC.

A run of 3 helical transmembrane segments spans residues 1-21 (MHYIYINIIIAFSMSLLGALL), 29-49 (SLLCLEGMMLALFVLSTLIAL), and 61-81 (IILLVFAACEAAIGLSLLVMV).

This sequence belongs to the complex I subunit 4L family. As to quaternary structure, core subunit of respiratory chain NADH dehydrogenase (Complex I) which is composed of 45 different subunits.

The protein localises to the mitochondrion inner membrane. It catalyses the reaction a ubiquinone + NADH + 5 H(+)(in) = a ubiquinol + NAD(+) + 4 H(+)(out). Functionally, core subunit of the mitochondrial membrane respiratory chain NADH dehydrogenase (Complex I) which catalyzes electron transfer from NADH through the respiratory chain, using ubiquinone as an electron acceptor. Part of the enzyme membrane arm which is embedded in the lipid bilayer and involved in proton translocation. The polypeptide is NADH-ubiquinone oxidoreductase chain 4L (MT-ND4L) (Procavia capensis (Rock hyrax)).